Here is a 429-residue protein sequence, read N- to C-terminus: Putative protease Do-like 14 (429 aa).

The segment at 87 to 113 (KSEAPINDEKGVSVEASDSSSKPSNGY) is disordered. Residues 113-338 (YLGRDTIANA…IRPWIGLKMV (226 aa)) form a serine protease region. Catalysis depends on charge relay system residues His165, Asp203, and Ser281. The PDZ domain occupies 318 to 424 (IIEHFKKSGR…RVTLEVIPEE (107 aa)).

This sequence belongs to the peptidase S1C family.

Functionally, putative serine protease. This is Putative protease Do-like 14 (DEGP14) from Arabidopsis thaliana (Mouse-ear cress).